The sequence spans 259 residues: Undecaprenyl-diphosphatase 4 (259 aa).

8 consecutive transmembrane segments (helical) span residues 1–21 (MNWL…FLPI), 39–59 (AGLF…FIYY), 71–91 (FSKL…IGLL), 99–119 (ISKT…FLYV), 133–153 (ITYK…FPAI), 173–193 (AAYF…ILQF), 208–228 (SLIV…SWMI), and 239–259 (FAYY…TDVF).

It belongs to the UppP family.

It is found in the cell membrane. It catalyses the reaction di-trans,octa-cis-undecaprenyl diphosphate + H2O = di-trans,octa-cis-undecaprenyl phosphate + phosphate + H(+). In terms of biological role, catalyzes the dephosphorylation of undecaprenyl diphosphate (UPP). Confers resistance to bacitracin. The sequence is that of Undecaprenyl-diphosphatase 4 from Bacillus thuringiensis subsp. konkukian (strain 97-27).